We begin with the raw amino-acid sequence, 243 residues long: Probable fructoselysine utilization operon transcriptional repressor (243 aa).

Residues 10–78 (QLLYATVRQR…QGKGTFVQSQ (69 aa)) form the HTH gntR-type domain. A DNA-binding region (H-T-H motif) is located at residues 38 to 57 (ENELCTQYNVSRITIRKAIS).

The protein operates within carbohydrate metabolism; fructoselysine degradation [regulation]. May regulate the transcription of the frlABCDR operon, involved in the utilization of fructoselysine and psicoselysine. This Shigella flexneri protein is Probable fructoselysine utilization operon transcriptional repressor (frlR).